A 708-amino-acid chain; its full sequence is Tryptophan synthase (708 aa).

Residues Met1–Ala305 are tryptophan synthase alpha chain. Active-site proton acceptor residues include Glu49 and Asp60. The segment at Leu306–Phe708 is tryptophan synthase beta chain. The residue at position 392 (Lys392) is an N6-(pyridoxal phosphate)lysine.

This sequence in the N-terminal section; belongs to the TrpA family. The protein in the C-terminal section; belongs to the TrpB family. Pyridoxal 5'-phosphate is required as a cofactor.

The enzyme catalyses (1S,2R)-1-C-(indol-3-yl)glycerol 3-phosphate + L-serine = D-glyceraldehyde 3-phosphate + L-tryptophan + H2O. Its pathway is amino-acid biosynthesis; L-tryptophan biosynthesis; L-tryptophan from chorismate: step 5/5. In Neurospora crassa (strain ATCC 24698 / 74-OR23-1A / CBS 708.71 / DSM 1257 / FGSC 987), this protein is Tryptophan synthase (trp-3).